The chain runs to 845 residues: Protein kintoun (845 aa).

A compositionally biased stretch (basic and acidic residues) spans 362–382; that stretch reads SKEQAQMHETLRHFSREDSGV. Disordered stretches follow at residues 362-420, 575-691, and 773-845; these read SKEQ…PVRH, QALK…SMSD, and AQHR…EMDD. Position 380 is a phosphoserine (S380). A compositionally biased stretch (acidic residues) spans 391 to 400; that stretch reads PVEEDPDGEL. Positions 584–593 are enriched in basic and acidic residues; that stretch reads GTKEEEKENQ. Basic residues predominate over residues 611 to 622; sequence KPGKKQRKRNKK. The segment covering 640 to 671 has biased composition (polar residues); that stretch reads LTKNSELQPKSTFNLPQRKQRSYSECNDSTGG. S779 is subject to Phosphoserine. The segment covering 794–804 has biased composition (polar residues); the sequence is LKQQENQSRNC.

This sequence belongs to the PIH1 family. Kintoun subfamily. Interacts with Pp1alpha-96A, Pp1-87B, Pp1-13C and flw.

It localises to the cytoplasm. Functionally, required for cytoplasmic pre-assembly of axonemal dyneins, thereby playing a central role in motility in cilia and flagella. Involved in pre-assembly of dynein arm complexes in the cytoplasm before intraflagellar transport loads them for the ciliary compartment. This Drosophila erecta (Fruit fly) protein is Protein kintoun.